The following is a 137-amino-acid chain: MSGGRRKEEPPQPQLANGALKVSVWSKVLRSDAAWEDKDEFLDVIYWFRQIIAVVLGVIWGVLPLRGFLGIAGFCLINAGVLYLYFSNYLQIDEEEYGGTWELTKEGFMTSFALFMVCVADSFTTGHLDHLLHCHPL.

Residues 1-44 (MSGGRRKEEPPQPQLANGALKVSVWSKVLRSDAAWEDKDEFLDV) are Cytoplasmic-facing. The chain crosses the membrane as a helical span at residues 45–65 (IYWFRQIIAVVLGVIWGVLPL). A topological domain (lumenal) is located at residue R66. Residues 67 to 84 (GFLGIAGFCLINAGVLYL) form a helical membrane-spanning segment. At 85–103 (YFSNYLQIDEEEYGGTWEL) the chain is on the cytoplasmic side. The chain crosses the membrane as a helical span at residues 104-127 (TKEGFMTSFALFMVCVADSFTTGH). At 128–137 (LDHLLHCHPL) the chain is on the lumenal side.

This sequence belongs to the EMC6 family. In terms of assembly, component of the GET- and EMC-like (GEL) complex, composed of RAB5IF/OPTI and TMCO1. The GEL complex is part of the multi-pass translocon (MPT) complex, composed of three subcomplexes, the GEL complex (composed of RAB5IF/OPTI and TMCO1), the BOS complex (composed of NCLN/Nicalin, NOMO and TMEM147) and the PAT complex (composed of WDR83OS/Asterix and CCDC47). The MPT complex associates with the SEC61 complex. Interacts with NDUFS3, NDUFA4, NDUFV1, NDUFA9 and NDUFS8 of the mitochondrial membrane respiratory chain NADH dehydrogenase (Complex I). Interacts with UQCRC2 of the ubiquinol-cytochrome c reductase complex (Complex III). Interacts with COX5A and COX7C of the cytochrome c oxidase complex (Complex IV). In terms of tissue distribution, expressed in embryonic stem cells and differentiated neuronal cells.

Its subcellular location is the endoplasmic reticulum membrane. It is found in the mitochondrion inner membrane. In terms of biological role, component of the multi-pass translocon (MPT) complex that mediates insertion of multi-pass membrane proteins into the lipid bilayer of membranes. The MPT complex takes over after the SEC61 complex: following membrane insertion of the first few transmembrane segments of proteins by the SEC61 complex, the MPT complex occludes the lateral gate of the SEC61 complex to promote insertion of subsequent transmembrane regions. Within the MPT complex, the GEL subcomplex may mediate insertion of transmembrane regions into the membrane. In addition to its role in multi-pass membrane insertion, RAB5IF/OPTI also acts as an assembly factor for mitochondrial respiratory complexes. The polypeptide is GEL complex subunit OPTI (Homo sapiens (Human)).